The following is a 140-amino-acid chain: Non-specific lipid transfer protein GPI-anchored 33 (140 aa).

Residues 1-27 form the signal peptide; it reads MAYTNKVTISAAVATMMLFLAVTIVDA. Cystine bridges form between Cys-40-Cys-80, Cys-52-Cys-64, Cys-65-Cys-104, and Cys-78-Cys-112. N-linked (GlcNAc...) asparagine glycosylation is present at Asn-91. The GPI-anchor amidated glycine moiety is linked to residue Gly-115. A propeptide spans 116–140 (removed in mature form); that stretch reads DASGGSTNKIAASMVLLGLVASLFF.

The protein belongs to the plant LTP family.

The protein localises to the cell membrane. Probable lipid transfer protein. The sequence is that of Non-specific lipid transfer protein GPI-anchored 33 from Arabidopsis thaliana (Mouse-ear cress).